A 147-amino-acid polypeptide reads, in one-letter code: Transthyretin (147 aa).

Residues 1-20 form the signal peptide; the sequence is MASLRLFLLCLAGLIFASEA. Position 30 is a sulfocysteine (Cys30). Lys35 lines the L-thyroxine pocket. 4-carboxyglutamate is present on Glu62. Position 72 is a phosphoserine (Ser72). Glu74 serves as a coordination point for L-thyroxine. Asn118 carries an N-linked (GlcNAc...) asparagine glycan. Ser137 serves as a coordination point for L-thyroxine.

Belongs to the transthyretin family. In terms of assembly, homotetramer. Dimer of dimers. In the homotetramer, subunits assemble around a central channel that can accommodate two ligand molecules. Interacts with RBP4. Sulfonation of the reactive cysteine Cys-30 enhances the stability of the native conformation of TTR, avoiding misassembly of the protein leading to amyloid formation. In terms of tissue distribution, detected in serum and cerebrospinal fluid (at protein level). Highly expressed in the choroid plexus. Detected at lower levels in the liver.

The protein localises to the secreted. Thyroid hormone-binding protein. Probably transports thyroxine from the bloodstream to the brain. This is Transthyretin (Ttr) from Rattus norvegicus (Rat).